Reading from the N-terminus, the 196-residue chain is Metalloproteinase inhibitor 2 (196 aa).

An N-terminal signal peptide occupies residues 1 to 2 (RA). Cys-3 provides a ligand contact to Zn(2+). Involved in metalloproteinase-binding stretches follow at residues 3 to 6 (CSCS) and 71 to 72 (SA). 6 disulfides stabilise this stretch: Cys-3/Cys-74, Cys-5/Cys-103, Cys-15/Cys-128, Cys-130/Cys-177, Cys-135/Cys-140, and Cys-148/Cys-169. Positions 3 to 128 (CSCSPVHPQQ…SLNHRYQMGC (126 aa)) constitute an NTR domain.

Belongs to the protease inhibitor I35 (TIMP) family. Interacts (via the C-terminal) with MMP2 (via the C-terminal PEX domain); the interaction inhibits the MMP2 activity. The activity of TIMP2 is dependent on the presence of disulfide bonds.

It is found in the secreted. In terms of biological role, complexes with metalloproteinases (such as collagenases) and irreversibly inactivates them by binding to their catalytic zinc cofactor. In Cricetulus longicaudatus (Long-tailed dwarf hamster), this protein is Metalloproteinase inhibitor 2 (TIMP2).